Consider the following 293-residue polypeptide: Putative F-box/kelch-repeat protein At4g34170 (293 aa).

The 47-residue stretch at 9–55 (VKTMLMLHDDLILNCLARVSRSNHPTLSLVCKRFHSLLASVELYQTR) folds into the F-box domain. 3 Kelch repeats span residues 94 to 140 (NIDA…TLDG), 141 to 187 (KIYV…ESVR), and 226 to 272 (SYCV…LADY).

In Arabidopsis thaliana (Mouse-ear cress), this protein is Putative F-box/kelch-repeat protein At4g34170.